The chain runs to 176 residues: Probable DNA-directed RNA polymerase subunit delta (176 aa).

Positions 14 to 81 (LSLIDVAHFI…GNNMWGLRAW (68 aa)) constitute an HTH HARE-type domain. 2 disordered regions span residues 91 to 119 (VQTQ…VDYD) and 140 to 176 (DEDE…PEDK). Composition is skewed to acidic residues over residues 105-119 (DDDD…VDYD) and 159-176 (TVED…PEDK).

This sequence belongs to the RpoE family. As to quaternary structure, RNAP is composed of a core of 2 alpha, a beta and a beta' subunits. The core is associated with a delta subunit and one of several sigma factors.

In terms of biological role, participates in both the initiation and recycling phases of transcription. In the presence of the delta subunit, RNAP displays an increased specificity of transcription, a decreased affinity for nucleic acids, and an increased efficiency of RNA synthesis because of enhanced recycling. This is Probable DNA-directed RNA polymerase subunit delta from Listeria welshimeri serovar 6b (strain ATCC 35897 / DSM 20650 / CCUG 15529 / CIP 8149 / NCTC 11857 / SLCC 5334 / V8).